Reading from the N-terminus, the 448-residue chain is Probable glycine dehydrogenase (decarboxylating) subunit 1 (448 aa).

This sequence belongs to the GcvP family. N-terminal subunit subfamily. In terms of assembly, the glycine cleavage system is composed of four proteins: P, T, L and H. In this organism, the P 'protein' is a heterodimer of two subunits.

It catalyses the reaction N(6)-[(R)-lipoyl]-L-lysyl-[glycine-cleavage complex H protein] + glycine + H(+) = N(6)-[(R)-S(8)-aminomethyldihydrolipoyl]-L-lysyl-[glycine-cleavage complex H protein] + CO2. Functionally, the glycine cleavage system catalyzes the degradation of glycine. The P protein binds the alpha-amino group of glycine through its pyridoxal phosphate cofactor; CO(2) is released and the remaining methylamine moiety is then transferred to the lipoamide cofactor of the H protein. The protein is Probable glycine dehydrogenase (decarboxylating) subunit 1 of Shouchella clausii (strain KSM-K16) (Alkalihalobacillus clausii).